The chain runs to 145 residues: Ribonuclease H (145 aa).

Positions 1-142 (MDTPVYLYTD…ADDLANRGAA (142 aa)) constitute an RNase H type-1 domain. Asp10, Glu48, Asp70, and Asp134 together coordinate Mg(2+).

This sequence belongs to the RNase H family. Monomer. It depends on Mg(2+) as a cofactor.

The protein resides in the cytoplasm. The catalysed reaction is Endonucleolytic cleavage to 5'-phosphomonoester.. In terms of biological role, endonuclease that specifically degrades the RNA of RNA-DNA hybrids. The chain is Ribonuclease H from Neisseria gonorrhoeae (strain ATCC 700825 / FA 1090).